The sequence spans 168 residues: MSEQAIAKKAEIVKSISEQFKSATSAVVVDYLGLTVEQVTALRKELREAGVKMEVLKNTYLRRAADANGYEALDDVFKGPTAVAFSNDDPVAPARIMAKYADQFDALKIKGGIIENKVASLDTIMEMSKMPDREGLLSQLASVLQAPVRDFALVVKAVAEAKDEEPAA.

Belongs to the universal ribosomal protein uL10 family. In terms of assembly, part of the ribosomal stalk of the 50S ribosomal subunit. The N-terminus interacts with L11 and the large rRNA to form the base of the stalk. The C-terminus forms an elongated spine to which L12 dimers bind in a sequential fashion forming a multimeric L10(L12)X complex.

Functionally, forms part of the ribosomal stalk, playing a central role in the interaction of the ribosome with GTP-bound translation factors. The chain is Large ribosomal subunit protein uL10 from Lacticaseibacillus casei (strain BL23) (Lactobacillus casei).